Reading from the N-terminus, the 592-residue chain is Probable tubulin polyglutamylase TTLL2 (592 aa).

Disordered regions lie at residues 1-23 and 51-77; these read MRGR…TTTP and GVSI…MAED. Positions 7–23 are enriched in polar residues; the sequence is CSSTQSQALGSLRTTTP. The TTL domain occupies 84–427; that stretch reads LKPLVFRVDE…NGLRNEGREA (344 aa). Residues Lys212, 218 to 219, 240 to 243, and 253 to 255 each bind ATP; these read RG, QKYI, and KCD. Arg218 contacts a protein. Arg279 contacts L-glutamate. Position 298–299 (298–299) interacts with ATP; sequence TN. L-glutamate-binding residues include Ser301 and Lys321. Asp373, Glu386, and Asn388 together coordinate Mg(2+). Position 404 (Lys404) interacts with L-glutamate.

The protein belongs to the tubulin--tyrosine ligase family. Mg(2+) serves as cofactor. Testis.

Probable tubulin polyglutamylase that generates side chains of glutamate on the gamma-carboxyl group of specific glutamate residues within the C-terminal tail of target proteins. Similar to TTLL1, may acquire enzymatic activity only in complex with other proteins as it is most likely lacking domains important for autonomous activity. Probably involved in the side-chain initiation step of the polyglutamylation reaction rather than the elongation step. This chain is Probable tubulin polyglutamylase TTLL2, found in Homo sapiens (Human).